Here is a 234-residue protein sequence, read N- to C-terminus: O-antigen biosynthesis glycosyltransferase WbnI (234 aa).

Substrate-binding positions include 8–13, 93–95, and 115–118; these read ICTGEY, NAV, and HPGY. Catalysis depends on E185, which acts as the Nucleophile.

The protein belongs to the glycosyltransferase 6 family. It depends on Mn(2+) as a cofactor.

It catalyses the reaction alpha-L-Fuc-(1-&gt;2)-beta-D-Gal-(1-&gt;3)-alpha-D-GalNAc-(1-&gt;3)-alpha-D-GalNAc-di-trans,octa-cis-undecaprenyl diphosphate + UDP-alpha-D-galactose = alpha-L-Fuc-(1-&gt;2)-[alpha-D-Gal-(1-&gt;3)]-beta-D-Gal-(1-&gt;3)-alpha-D-GalNAc-(1-&gt;3)-alpha-D-GalNAc-di-trans,octa-cis-undecaprenyl diphosphate + UDP + H(+). Its pathway is bacterial outer membrane biogenesis; LPS O-antigen biosynthesis. In terms of biological role, involved in the assembly of the O-repeating unit during O-antigen biosynthesis. The sequence is that of O-antigen biosynthesis glycosyltransferase WbnI from Escherichia coli.